Here is a 350-residue protein sequence, read N- to C-terminus: D-alanine--D-alanine ligase (350 aa).

The region spanning 143–344 (KRILSTFGIS…FKSLINKLIL (202 aa)) is the ATP-grasp domain. Residue 172–227 (INNIKFPCCIKPSNQGSSFGVNVANDFISLKESIDVAFLYSKKILIEPFIQGREIE) coordinates ATP. Mg(2+) contacts are provided by Asp-298, Glu-311, and Asn-313.

Belongs to the D-alanine--D-alanine ligase family. The cofactor is Mg(2+). Requires Mn(2+) as cofactor.

It is found in the cytoplasm. It catalyses the reaction 2 D-alanine + ATP = D-alanyl-D-alanine + ADP + phosphate + H(+). The protein operates within cell wall biogenesis; peptidoglycan biosynthesis. In terms of biological role, cell wall formation. The sequence is that of D-alanine--D-alanine ligase from Wigglesworthia glossinidia brevipalpis.